A 367-amino-acid chain; its full sequence is Calcium uniporter protein, mitochondrial (367 aa).

Residues 1-12 (MAMPRVLCRVRL) constitute a mitochondrion transit peptide. Topologically, residues 13-232 (LIHNDFSVIS…LEEKKLELEQ (220 aa)) are mitochondrial matrix. Positions 61-80 (KQDASSSSSDSDSSDSDEDD) are disordered. Residues 199–233 (REHQLQKEVELTTQLETLQQELLPLEEKKLELEQV) are a coiled coil. The helical transmembrane segment at 233–253 (VANRRSNWMAWAGLGLMSVQF) threads the bilayer. The Mitochondrial intermembrane segment spans residues 254–262 (GILARLTWW). The chain crosses the membrane as a helical span at residues 263–284 (EYSWDIMEPVTYFVTYGTAMAA). The Selectivity filter motif lies at 266-276 (WDIMEPVTYFV). Glu270 is a Ca(2+) binding site. Residues 285-367 (YAYFVLTREE…KKQVEEKAKE (83 aa)) are Mitochondrial matrix-facing.

It belongs to the MCU (TC 1.A.77) family. As to quaternary structure, homotetramer. Component of the uniplex complex, composed of MCU, EMRE, MICU1 and MICU2 in a 4:4:1:1 stoichiometry.

The protein localises to the mitochondrion inner membrane. It carries out the reaction Ca(2+)(in) = Ca(2+)(out). MCU channel activity is regulated by the heterodimer composed of MICU1 and MICU2, which act as calcium-sensors. At low calcium levels, MICU1 occludes the pore of the MCU channel, preventing mitochondrial calcium uptake. At higher calcium levels, calcium-binding to MICU1 and MICU2 induces a conformational change that weakens MCU-MICU1 interactions and moves the MICU1-MICU2 heterodimer away from the pore, allowing calcium permeation through the channel. Channel-forming and calcium-conducting subunit of the mitochondrial inner membrane calcium uniporter complex (uniplex), which mediates calcium uptake into the mitochondrial matrix. MCU channel activity is regulated by the calcium-sensor subunits of the uniplex MICU1 and MICU2. Mitochondrial calcium homeostasis plays key roles in cellular physiology and regulates ATP production, cytoplasmic calcium signals and activation of cell death pathways. This is Calcium uniporter protein, mitochondrial from Tribolium castaneum (Red flour beetle).